A 278-amino-acid polypeptide reads, in one-letter code: Large ribosomal subunit protein uL2 (278 aa).

The segment at 201 to 278 (HGNINDGKAG…IMRSRHQRKK (78 aa)) is disordered. Residues 210–221 (GRSRWRGKRPHV) are compositionally biased toward basic residues.

Belongs to the universal ribosomal protein uL2 family. Part of the 50S ribosomal subunit. Forms a bridge to the 30S subunit in the 70S ribosome.

In terms of biological role, one of the primary rRNA binding proteins. Required for association of the 30S and 50S subunits to form the 70S ribosome, for tRNA binding and peptide bond formation. It has been suggested to have peptidyltransferase activity; this is somewhat controversial. Makes several contacts with the 16S rRNA in the 70S ribosome. The sequence is that of Large ribosomal subunit protein uL2 from Sinorhizobium fredii (strain NBRC 101917 / NGR234).